The chain runs to 58 residues: Large ribosomal subunit protein uL30 (58 aa).

It belongs to the universal ribosomal protein uL30 family. Part of the 50S ribosomal subunit.

The protein is Large ribosomal subunit protein uL30 of Novosphingobium aromaticivorans (strain ATCC 700278 / DSM 12444 / CCUG 56034 / CIP 105152 / NBRC 16084 / F199).